Reading from the N-terminus, the 244-residue chain is Homeobox-leucine zipper protein HOX14 (244 aa).

Residues 25 to 64 (ASGEVQGERPRARRRRRRGARCVGGGGGGGEVDGGDPKKR) are disordered. The span at 35 to 44 (RARRRRRRGA) shows a compositional bias: basic residues. Over residues 46–56 (CVGGGGGGGEV) the composition is skewed to gly residues. Positions 59 to 118 (GDPKKRRLSDEQVEMLELSFREERKLETGRKVHLASELGLDPKQVAVWFQNRRARHKSKL) form a DNA-binding region, homeobox. The stretch at 108–167 (QNRRARHKSKLLEEEFSKLKHAHDAAILHKCHLENEVLRLKERLVVAEEEVRRLRSAAGS) forms a coiled coil.

Belongs to the HD-ZIP homeobox family. Class I subfamily. As to expression, expressed in roots, stems, leaf blades and panicles.

It localises to the nucleus. Probable transcription factor. This is Homeobox-leucine zipper protein HOX14 (HOX14) from Oryza sativa subsp. indica (Rice).